A 20-amino-acid chain; its full sequence is Trypsin inhibitor A chain (20 aa).

It belongs to the protease inhibitor I3 (leguminous Kunitz-type inhibitor) family. As to quaternary structure, heterodimer of an 'A' and a 'B' chain linked by a disulfide bond.

Functionally, inhibits trypsin and alpha-chymotrypsin. The polypeptide is Trypsin inhibitor A chain (Albizia julibrissin (Silk tree)).